The chain runs to 264 residues: Endoglucanase S (264 aa).

A signal peptide spans M1–A32.

Belongs to the glycosyl hydrolase 12 (cellulase H) family.

The catalysed reaction is Endohydrolysis of (1-&gt;4)-beta-D-glucosidic linkages in cellulose, lichenin and cereal beta-D-glucans.. The protein is Endoglucanase S (celS) of Pectobacterium parmentieri.